The sequence spans 365 residues: 3-isopropylmalate dehydrogenase (365 aa).

Position 78-91 (Gly-78–Glu-91) interacts with NAD(+). Substrate contacts are provided by Arg-98, Arg-108, Arg-136, and Asp-226. Mg(2+)-binding residues include Asp-226, Asp-250, and Asp-254. Gly-284–Asn-296 serves as a coordination point for NAD(+).

It belongs to the isocitrate and isopropylmalate dehydrogenases family. LeuB type 1 subfamily. In terms of assembly, homodimer. The cofactor is Mg(2+). Mn(2+) serves as cofactor.

The protein resides in the cytoplasm. The catalysed reaction is (2R,3S)-3-isopropylmalate + NAD(+) = 4-methyl-2-oxopentanoate + CO2 + NADH. It functions in the pathway amino-acid biosynthesis; L-leucine biosynthesis; L-leucine from 3-methyl-2-oxobutanoate: step 3/4. Functionally, catalyzes the oxidation of 3-carboxy-2-hydroxy-4-methylpentanoate (3-isopropylmalate) to 3-carboxy-4-methyl-2-oxopentanoate. The product decarboxylates to 4-methyl-2 oxopentanoate. This Synechococcus elongatus (strain ATCC 33912 / PCC 7942 / FACHB-805) (Anacystis nidulans R2) protein is 3-isopropylmalate dehydrogenase.